Consider the following 390-residue polypeptide: S-adenosylmethionine synthase 2 (390 aa).

E9 contributes to the Mg(2+) binding site. H15 is an ATP binding site. A K(+)-binding site is contributed by E43. Residues E56 and Q99 each contribute to the L-methionine site. ATP contacts are provided by residues 167–169, 235–238, D246, 252–253, A269, K273, and K277; these read DGK, SGRF, and RK. D246 provides a ligand contact to L-methionine. Residue K277 coordinates L-methionine.

It belongs to the AdoMet synthase family. Homotetramer. Mn(2+) is required as a cofactor. Requires Mg(2+) as cofactor. It depends on Co(2+) as a cofactor. K(+) serves as cofactor.

It is found in the cytoplasm. It carries out the reaction L-methionine + ATP + H2O = S-adenosyl-L-methionine + phosphate + diphosphate. The protein operates within amino-acid biosynthesis; S-adenosyl-L-methionine biosynthesis; S-adenosyl-L-methionine from L-methionine: step 1/1. Its function is as follows. Catalyzes the formation of S-adenosylmethionine from methionine and ATP. The reaction comprises two steps that are both catalyzed by the same enzyme: formation of S-adenosylmethionine (AdoMet) and triphosphate, and subsequent hydrolysis of the triphosphate. In Solanum tuberosum (Potato), this protein is S-adenosylmethionine synthase 2 (METK2).